Reading from the N-terminus, the 443-residue chain is L-seryl-tRNA(Sec) selenium transferase (443 aa).

Residue Lys-285 is modified to N6-(pyridoxal phosphate)lysine.

Belongs to the SelA family. Pyridoxal 5'-phosphate serves as cofactor.

The protein localises to the cytoplasm. The enzyme catalyses L-seryl-tRNA(Sec) + selenophosphate + H(+) = L-selenocysteinyl-tRNA(Sec) + phosphate. It participates in aminoacyl-tRNA biosynthesis; selenocysteinyl-tRNA(Sec) biosynthesis; selenocysteinyl-tRNA(Sec) from L-seryl-tRNA(Sec) (bacterial route): step 1/1. Functionally, converts seryl-tRNA(Sec) to selenocysteinyl-tRNA(Sec) required for selenoprotein biosynthesis. The sequence is that of L-seryl-tRNA(Sec) selenium transferase from Campylobacter lari (strain RM2100 / D67 / ATCC BAA-1060).